The primary structure comprises 588 residues: Adenine deaminase (588 aa).

Belongs to the metallo-dependent hydrolases superfamily. Adenine deaminase family. Homodimer. It depends on Mn(2+) as a cofactor.

The enzyme catalyses adenine + H2O + H(+) = hypoxanthine + NH4(+). In Escherichia coli (strain SE11), this protein is Adenine deaminase.